The sequence spans 252 residues: Large ribosomal subunit protein uL4 (252 aa).

This sequence belongs to the universal ribosomal protein uL4 family. Part of the 50S ribosomal subunit.

One of the primary rRNA binding proteins, this protein initially binds near the 5'-end of the 23S rRNA. It is important during the early stages of 50S assembly. It makes multiple contacts with different domains of the 23S rRNA in the assembled 50S subunit and ribosome. Functionally, forms part of the polypeptide exit tunnel. The protein is Large ribosomal subunit protein uL4 of Methanococcus aeolicus (strain ATCC BAA-1280 / DSM 17508 / OCM 812 / Nankai-3).